Reading from the N-terminus, the 643-residue chain is Cytoplasmic dynein 1 intermediate chain 1 (643 aa).

Basic and acidic residues-rich tracts occupy residues 1–13 (MSDK…ELER) and 20–60 (QIRE…RETE). Disordered regions lie at residues 1–65 (MSDK…LLQS) and 96–123 (MSPS…RTLQ). An N-acetylserine modification is found at Ser2. An interaction with DCTN1 region spans residues 2–123 (SDKSDLKAEL…DLGPLTRTLQ (122 aa)). A phosphoserine mark is found at Ser50 and Ser100. Over residues 96–107 (MSPSSKSVSTPS) the composition is skewed to low complexity. Phosphothreonine is present on Thr105. Ser107 and Ser111 each carry phosphoserine. The interaction with DYNLT1 stretch occupies residues 145 to 161 (KLGVSKVTQVDFLPREV). The segment at 167–219 (ETQTPLATHQSEEDEEDEEMVEPKVGHDSELENQDKKQETKEAPPRELTEEEK) is disordered. Thr174 is subject to Phosphothreonine. Ser177 and Ser195 each carry phosphoserine. Residues 187-219 (VEPKVGHDSELENQDKKQETKEAPPRELTEEEK) show a composition bias toward basic and acidic residues. WD repeat units follow at residues 283–332 (SKHR…TTPE), 336–376 (HCQS…RTPV), 385–426 (AHTH…TPQE), 435–475 (SKPV…AGIG), 480–525 (GHQG…PLYS), 528–568 (DNAD…EVPT), and 574–613 (EGAY…VPHN). Ser633 bears the Phosphoserine mark.

This sequence belongs to the dynein intermediate chain family. In terms of assembly, homodimer. The cytoplasmic dynein 1 complex consists of two catalytic heavy chains (HCs) and a number of non-catalytic subunits presented by intermediate chains (ICs), light intermediate chains (LICs) and light chains (LCs); the composition seems to vary in respect to the IC, LIC and LC composition. The heavy chain homodimer serves as a scaffold for the probable homodimeric assembly of the respective non-catalytic subunits. The ICs and LICs bind directly to the HC dimer and the LCs assemble on the IC dimer. Isoform 1, isoform 2 and isoform 3 interact with DYNC1H1. Isoform 1, isoform 2 and isoform 3 interact with DYNLT3. Isoform 1, isoform 2 and isoform 3 interact with DYNLT1. Interacts with DCTN1. Interacts with MCRS1; the interaction is required for the proper distribution of centriolar satellites. High levels seen in the brain and testis, while a lower level expression is seen in the liver, spleen, kidney, lung, skeletal muscle and heart.

The protein resides in the cytoplasm. It localises to the chromosome. Its subcellular location is the centromere. The protein localises to the kinetochore. It is found in the cytoskeleton. The protein resides in the spindle pole. In terms of biological role, acts as one of several non-catalytic accessory components of the cytoplasmic dynein 1 complex that are thought to be involved in linking dynein to cargos and to adapter proteins that regulate dynein function. Cytoplasmic dynein 1 acts as a motor for the intracellular retrograde motility of vesicles and organelles along microtubules. The intermediate chains mediate the binding of dynein to dynactin via its 150 kDa component (p150-glued) DCTN1. May play a role in mediating the interaction of cytoplasmic dynein with membranous organelles and kinetochores. This Rattus norvegicus (Rat) protein is Cytoplasmic dynein 1 intermediate chain 1 (Dync1i1).